The following is a 354-amino-acid chain: Alanine racemase (354 aa).

Catalysis depends on Lys33, which acts as the Proton acceptor; specific for D-alanine. Lys33 carries the post-translational modification N6-(pyridoxal phosphate)lysine. Arg127 provides a ligand contact to substrate. Catalysis depends on Tyr251, which acts as the Proton acceptor; specific for L-alanine. Met299 serves as a coordination point for substrate.

It belongs to the alanine racemase family. It depends on pyridoxal 5'-phosphate as a cofactor.

The enzyme catalyses L-alanine = D-alanine. It functions in the pathway amino-acid biosynthesis; D-alanine biosynthesis; D-alanine from L-alanine: step 1/1. Its function is as follows. Catalyzes the interconversion of L-alanine and D-alanine. May also act on other amino acids. This Fusobacterium nucleatum subsp. nucleatum (strain ATCC 25586 / DSM 15643 / BCRC 10681 / CIP 101130 / JCM 8532 / KCTC 2640 / LMG 13131 / VPI 4355) protein is Alanine racemase (alr).